The chain runs to 759 residues: Na(+)/H(+) exchanger beta (759 aa).

The Cytoplasmic portion of the chain corresponds to 1–14; the sequence is MPAFSCAFPGCRRD. A helical transmembrane segment spans residues 15-34; sequence LLVIVLVVFVGIGLPIEASA. The Extracellular portion of the chain corresponds to 35-75; it reads PAYQSHGTEGSHLTNITNTKKAFPVLAVNYEHVRKPFEIAL. An N-linked (GlcNAc...) asparagine glycan is attached at Asn49. The chain crosses the membrane as a helical span at residues 76–95; that stretch reads WILLALLMKLGFHLIPRLSA. The Cytoplasmic portion of the chain corresponds to 96-97; that stretch reads VV. Residues 98–117 traverse the membrane as a helical segment; it reads PESCLLIVVGLLVGGLIKVI. Residues 118 to 122 are Extracellular-facing; the sequence is GEEPP. A helical membrane pass occupies residues 123–142; that stretch reads VLDSQLFFLCLLPPIILDAG. Residues 143-149 are Cytoplasmic-facing; sequence YFLPIRP. A helical transmembrane segment spans residues 150-169; that stretch reads FTENVGTILVFAVIGTLWNA. Topologically, residues 170–195 are extracellular; sequence FFMGGLLYALCQIESVGLSGVDLLAC. A helical membrane pass occupies residues 196-214; that stretch reads LLFGSIVSAVDPVAVLAVF. Residues 215–225 lie on the Cytoplasmic side of the membrane; sequence EEIHINELVHI. The helical transmembrane segment at 226-244 threads the bilayer; that stretch reads LVFGESLLNDAVTVVLYNL. Residues 245–261 are Extracellular-facing; that stretch reads FEEFSKVGTVTVLDVFL. The chain crosses the membrane as a helical span at residues 262 to 282; that stretch reads GVVCFFVVSLGGVLVGAIYGF. Residues 283-311 are Cytoplasmic-facing; sequence LAAFTSRFTSHTRVIEPLFVFLYSYMAYL. Residues 312–330 form a helical membrane-spanning segment; that stretch reads SSEMFHLSGIMALIACGVV. Residues 331–352 lie on the Extracellular side of the membrane; it reads MRPYVEANISHKSYTTIKYFLK. Asn338 carries N-linked (GlcNAc...) asparagine glycosylation. The chain crosses the membrane as a helical span at residues 353-372; it reads MWSSVSETLIFIFLGVSTVA. Topologically, residues 373–376 are cytoplasmic; the sequence is GPHA. The helical transmembrane segment at 377–398 threads the bilayer; sequence WNWTFVITTVILCLVSRVLGVI. The Extracellular portion of the chain corresponds to 399–446; the sequence is GLTFIINKFRIVKLTKKDQFIVAYGGLRGAIAFSLGYLLSNSHQMRNL. Residues 447 to 467 traverse the membrane as a helical segment; it reads FLTAIITVIFFTVFVQGMTIR. Topologically, residues 468 to 759 are cytoplasmic; sequence PLVELLAVKK…KEDDDPFMSC (292 aa). Phosphoserine; by PKA occurs at positions 641 and 648. Residues 681–759 are disordered; that stretch reads FPTVHFEQPS…KEDDDPFMSC (79 aa). Positions 707-719 are enriched in basic and acidic residues; it reads VPKRPSLKADIEG.

It belongs to the monovalent cation:proton antiporter 1 (CPA1) transporter (TC 2.A.36) family. Post-translationally, activated by cAMP, protein kinase A and protein kinase C.

It is found in the basolateral cell membrane. In terms of biological role, involved in pH regulation to eliminate acids generated by active metabolism or to counter adverse environmental conditions. Major proton extruding system driven by the inward sodium ion chemical gradient. The polypeptide is Na(+)/H(+) exchanger beta (Oncorhynchus mykiss (Rainbow trout)).